Consider the following 77-residue polypeptide: Acyl carrier protein (77 aa).

Residues 2–77 (SDVADRVKKI…DAVKFISEAS (76 aa)) form the Carrier domain. At Ser37 the chain carries O-(pantetheine 4'-phosphoryl)serine.

It belongs to the acyl carrier protein (ACP) family. In terms of processing, 4'-phosphopantetheine is transferred from CoA to a specific serine of apo-ACP by AcpS. This modification is essential for activity because fatty acids are bound in thioester linkage to the sulfhydryl of the prosthetic group.

The protein localises to the cytoplasm. It participates in lipid metabolism; fatty acid biosynthesis. Carrier of the growing fatty acid chain in fatty acid biosynthesis. This is Acyl carrier protein from Ruegeria sp. (strain TM1040) (Silicibacter sp.).